The chain runs to 450 residues: 3-phosphoshikimate 1-carboxyvinyltransferase (450 aa).

3-phosphoshikimate-binding residues include K28, S29, and R33. Residue K28 coordinates phosphoenolpyruvate. Phosphoenolpyruvate contacts are provided by G100 and R128. 3-phosphoshikimate contacts are provided by S173, Q175, D326, and K353. Q175 serves as a coordination point for phosphoenolpyruvate. The active-site Proton acceptor is D326. R357 and R402 together coordinate phosphoenolpyruvate.

Belongs to the EPSP synthase family. In terms of assembly, monomer.

The protein resides in the cytoplasm. The catalysed reaction is 3-phosphoshikimate + phosphoenolpyruvate = 5-O-(1-carboxyvinyl)-3-phosphoshikimate + phosphate. It participates in metabolic intermediate biosynthesis; chorismate biosynthesis; chorismate from D-erythrose 4-phosphate and phosphoenolpyruvate: step 6/7. In terms of biological role, catalyzes the transfer of the enolpyruvyl moiety of phosphoenolpyruvate (PEP) to the 5-hydroxyl of shikimate-3-phosphate (S3P) to produce enolpyruvyl shikimate-3-phosphate and inorganic phosphate. The chain is 3-phosphoshikimate 1-carboxyvinyltransferase from Brucella melitensis biotype 2 (strain ATCC 23457).